Consider the following 135-residue polypeptide: Basic phospholipase A2 KBf-VA (135 aa).

Intrachain disulfides connect Cys28/Cys87, Cys42/Cys134, Cys44/Cys60, Cys59/Cys115, Cys66/Cys108, Cys76/Cys101, and Cys94/Cys106. Residues Tyr43, Gly45, and Gly47 each contribute to the Ca(2+) site. His63 is a catalytic residue. A Ca(2+)-binding site is contributed by Asp64. The active site involves Asp109.

It belongs to the phospholipase A2 family. Group I subfamily. D49 sub-subfamily. Requires Ca(2+) as cofactor. In terms of tissue distribution, expressed by the venom gland.

The protein resides in the secreted. The enzyme catalyses a 1,2-diacyl-sn-glycero-3-phosphocholine + H2O = a 1-acyl-sn-glycero-3-phosphocholine + a fatty acid + H(+). In terms of biological role, snake venom phospholipase A2 (PLA2) that inhibits neuromuscular transmission by blocking acetylcholine release from the nerve termini. PLA2 catalyzes the calcium-dependent hydrolysis of the 2-acyl groups in 3-sn-phosphoglycerides. This is Basic phospholipase A2 KBf-VA from Bungarus fasciatus (Banded krait).